The following is a 190-amino-acid chain: Peptide methionine sulfoxide reductase MsrA (190 aa).

Residue C21 is part of the active site.

This sequence belongs to the MsrA Met sulfoxide reductase family.

The enzyme catalyses L-methionyl-[protein] + [thioredoxin]-disulfide + H2O = L-methionyl-(S)-S-oxide-[protein] + [thioredoxin]-dithiol. The catalysed reaction is [thioredoxin]-disulfide + L-methionine + H2O = L-methionine (S)-S-oxide + [thioredoxin]-dithiol. Has an important function as a repair enzyme for proteins that have been inactivated by oxidation. Catalyzes the reversible oxidation-reduction of methionine sulfoxide in proteins to methionine. The sequence is that of Peptide methionine sulfoxide reductase MsrA from Polynucleobacter asymbioticus (strain DSM 18221 / CIP 109841 / QLW-P1DMWA-1) (Polynucleobacter necessarius subsp. asymbioticus).